A 418-amino-acid chain; its full sequence is ATP phosphoribosyltransferase regulatory subunit (418 aa).

The protein belongs to the class-II aminoacyl-tRNA synthetase family. HisZ subfamily. As to quaternary structure, heteromultimer composed of HisG and HisZ subunits.

It localises to the cytoplasm. The protein operates within amino-acid biosynthesis; L-histidine biosynthesis; L-histidine from 5-phospho-alpha-D-ribose 1-diphosphate: step 1/9. Its function is as follows. Required for the first step of histidine biosynthesis. May allow the feedback regulation of ATP phosphoribosyltransferase activity by histidine. This Halothermothrix orenii (strain H 168 / OCM 544 / DSM 9562) protein is ATP phosphoribosyltransferase regulatory subunit.